We begin with the raw amino-acid sequence, 483 residues long: NAD-dependent protein deacetylase SRT1 (483 aa).

Residues Pro-27–Pro-270 enclose the Deacetylase sirtuin-type domain. NAD(+)-binding positions include Ala-53–Thr-57, Asp-63–Arg-65, and Gln-114–Asp-117. Residue His-134 is the Proton acceptor of the active site. Zn(2+)-binding residues include Cys-142, Cys-145, Cys-167, and Cys-172. NAD(+) contacts are provided by residues Gly-209–Ser-211 and Asn-235–Gln-237.

The protein belongs to the sirtuin family. Class IV subfamily. Zn(2+) serves as cofactor.

It localises to the nucleus. The enzyme catalyses N(6)-acetyl-L-lysyl-[protein] + NAD(+) + H2O = 2''-O-acetyl-ADP-D-ribose + nicotinamide + L-lysyl-[protein]. Functionally, NAD-dependent protein deacetylase. Has deacetylase activity towards H3K9Ac. May have a function in the safeguard against genome instability and DNA damage to ensure plant cell growth. May negatively regulate metabolic signal transduction involving methanol and jasmonates during leaf senescence. Required for histone H3K9Ac deacetylation and repression of AP2-1/RSR1 and amylase genes during early seed development. Functions as an epigenetic regulator to repress the expression of glycolytic genes and glycolysis in seedlings. Reduces lysine acetylation of the glycolytic glyceraldehyde-3-phosphate dehydrogenase (GAPDH), which is found to also function as an activator of glycolytic gene expression. The polypeptide is NAD-dependent protein deacetylase SRT1 (Oryza sativa subsp. indica (Rice)).